The primary structure comprises 440 residues: MRPCQTLVHAALIVTQDKERRILENASMAVTDGIVADLGPRHEMITCWQPRHEADFGRCLLLPGLVNAHTHSAMTFLRGLADDMPLMDWLNKRIFPVEQKLTPEIVRLGSLMGYAEMLRTGTTACVDMYIFEKEAMAAADQAGLRCLGGEVVFAFPSAAFPGPEAALEETRALAQKYAGHPRLSIAVNPHSVYTTTPEILAACRDLARELALPLHMHLAETAEETQICLHAHGKRPVACCRSLELLDGPCTLAHVVDVTPDELDFLAQRGAVAVHNISSNMKLASGASPVPAMLERGMPVALGTDGAASNNRLNMFTEMGRAALLHKLTGMDPTLLPAQTVLDMATLGGAAAMHDNRLGSLAVGKAADCVALDLAAPNMQPLYNAVSHLVYAATGMENRMTMIAGEIVYEDGKFTRFDYDALCREMTSIRDFVRRQAGLA.

Zn(2+) contacts are provided by histidine 69 and histidine 71. 2 residues coordinate substrate: glutamate 98 and histidine 190. Histidine 217 is a Zn(2+) binding site. Substrate-binding residues include glutamate 220 and aspartate 305. Aspartate 305 is a Zn(2+) binding site.

This sequence belongs to the metallo-dependent hydrolases superfamily. MTA/SAH deaminase family. It depends on Zn(2+) as a cofactor.

The enzyme catalyses S-adenosyl-L-homocysteine + H2O + H(+) = S-inosyl-L-homocysteine + NH4(+). The catalysed reaction is S-methyl-5'-thioadenosine + H2O + H(+) = S-methyl-5'-thioinosine + NH4(+). In terms of biological role, catalyzes the deamination of 5-methylthioadenosine and S-adenosyl-L-homocysteine into 5-methylthioinosine and S-inosyl-L-homocysteine, respectively. Is also able to deaminate adenosine. In Desulfovibrio desulfuricans (strain ATCC 27774 / DSM 6949 / MB), this protein is 5-methylthioadenosine/S-adenosylhomocysteine deaminase.